Reading from the N-terminus, the 305-residue chain is tRNA pseudouridine synthase B (305 aa).

The active-site Nucleophile is the D39.

Belongs to the pseudouridine synthase TruB family. Type 1 subfamily.

It carries out the reaction uridine(55) in tRNA = pseudouridine(55) in tRNA. Its function is as follows. Responsible for synthesis of pseudouridine from uracil-55 in the psi GC loop of transfer RNAs. The polypeptide is tRNA pseudouridine synthase B (Staphylococcus aureus (strain bovine RF122 / ET3-1)).